The chain runs to 181 residues: MEPEIKVVNVVVSTQIGTDIDLEYAADILDNAEYEPEQFPGLVCRLSEPKVALLIFRSGKLNCTGARCKEDAVIAINKIVKELKEAGMDLIDNPEVKVQNMVATTELGMEPNLDDISTLECTEYEPEQFPGLVYRLSEPKVVVLIFGSGKVVITGLKVIEDAYIAFDKISKTLKELEEELY.

A run of 2 repeats spans residues 7 to 83 (VVNV…VKEL) and 98 to 173 (VQNM…SKTL).

Belongs to the TBP family.

In terms of biological role, general factor that plays a role in the activation of archaeal genes transcribed by RNA polymerase. Binds specifically to the TATA box promoter element which lies close to the position of transcription initiation. The sequence is that of TATA-box-binding protein from Methanococcus maripaludis (strain DSM 14266 / JCM 13030 / NBRC 101832 / S2 / LL).